Reading from the N-terminus, the 607-residue chain is Zinc metalloproteinase-disintegrin-like atrase-A (607 aa).

The signal sequence occupies residues 1-20; that stretch reads MIQALLVIICLAVFPHQGSS. Positions 21 to 196 are excised as a propeptide; it reads IILESGNVND…KTSQLTNTPE (176 aa). The Peptidase M12B domain maps to 205-398; that stretch reads KYIEFYLVVD…ERPQCILNKP (194 aa). Glutamate 208 is a Ca(2+) binding site. Residues asparagine 220 and asparagine 270 are each glycosylated (N-linked (GlcNAc...) asparagine). Aspartate 290 is a Ca(2+) binding site. Residue asparagine 301 is glycosylated (N-linked (GlcNAc...) asparagine). 3 disulfide bridges follow: cysteine 314/cysteine 393, cysteine 353/cysteine 377, and cysteine 355/cysteine 360. Residues histidine 338, histidine 342, and histidine 348 each contribute to the Zn(2+) site. Ca(2+) contacts are provided by cysteine 393, asparagine 396, asparagine 411, phenylalanine 413, glutamate 415, glutamate 418, and aspartate 421. Positions 406–492 constitute a Disintegrin domain; the sequence is RPVCGNNFVE…ECPTDSLQRN (87 aa). Intrachain disulfides connect cysteine 409-cysteine 438, cysteine 420-cysteine 433, cysteine 422-cysteine 428, cysteine 432-cysteine 455, cysteine 446-cysteine 452, cysteine 451-cysteine 477, cysteine 464-cysteine 484, cysteine 471-cysteine 503, cysteine 496-cysteine 508, cysteine 515-cysteine 565, cysteine 530-cysteine 573, cysteine 543-cysteine 553, cysteine 560-cysteine 599, and cysteine 593-cysteine 604. Residue asparagine 434 is glycosylated (N-linked (GlcNAc...) asparagine). The D/ECD-tripeptide motif lies at 470–472; that stretch reads DCD. Ca(2+)-binding residues include aspartate 472, leucine 473, glutamate 475, aspartate 487, and serine 488. Residue asparagine 522 is glycosylated (N-linked (GlcNAc...) asparagine).

The protein belongs to the venom metalloproteinase (M12B) family. P-III subfamily. P-IIIa sub-subfamily. As to quaternary structure, monomer. Zn(2+) is required as a cofactor. As to expression, expressed by the venom gland.

The protein resides in the secreted. Its function is as follows. Snake venom zinc metalloproteinase that inhibits platelet aggregation by cleaving platelet glycoprotein Ib alpha (GP1BA) at Glu-298/Asp-299, and abolishes binding of von Willebrand factor (VWF) to GPIBA. This chain is Zinc metalloproteinase-disintegrin-like atrase-A, found in Naja atra (Chinese cobra).